A 226-amino-acid chain; its full sequence is Cytidylate kinase (226 aa).

Gly11–Thr19 provides a ligand contact to ATP.

Belongs to the cytidylate kinase family. Type 1 subfamily.

The protein resides in the cytoplasm. The enzyme catalyses CMP + ATP = CDP + ADP. It catalyses the reaction dCMP + ATP = dCDP + ADP. The polypeptide is Cytidylate kinase (Pediococcus pentosaceus (strain ATCC 25745 / CCUG 21536 / LMG 10740 / 183-1w)).